The primary structure comprises 543 residues: Malate synthase (543 aa).

The protein belongs to the malate synthase family. Homodimer.

Its subcellular location is the cytoplasm. The catalysed reaction is glyoxylate + acetyl-CoA + H2O = (S)-malate + CoA + H(+). The protein operates within carbohydrate metabolism; glyoxylate cycle; (S)-malate from isocitrate: step 2/2. This is Malate synthase (aceB) from Streptomyces arenae.